Reading from the N-terminus, the 427-residue chain is Glutamate-1-semialdehyde 2,1-aminomutase (427 aa).

Position 265 is an N6-(pyridoxal phosphate)lysine (Lys265).

This sequence belongs to the class-III pyridoxal-phosphate-dependent aminotransferase family. HemL subfamily. Homodimer. Pyridoxal 5'-phosphate serves as cofactor.

The protein resides in the cytoplasm. It carries out the reaction (S)-4-amino-5-oxopentanoate = 5-aminolevulinate. It functions in the pathway porphyrin-containing compound metabolism; protoporphyrin-IX biosynthesis; 5-aminolevulinate from L-glutamyl-tRNA(Glu): step 2/2. In Burkholderia pseudomallei (strain 1710b), this protein is Glutamate-1-semialdehyde 2,1-aminomutase.